A 253-amino-acid polypeptide reads, in one-letter code: Triosephosphate isomerase (253 aa).

8-10 serves as a coordination point for substrate; it reads NWK. His91 functions as the Electrophile in the catalytic mechanism. Residue Glu168 is the Proton acceptor of the active site. Residues Gly174, Ser213, and 234–235 contribute to the substrate site; that span reads GG.

It belongs to the triosephosphate isomerase family. As to quaternary structure, homodimer.

It is found in the cytoplasm. The enzyme catalyses D-glyceraldehyde 3-phosphate = dihydroxyacetone phosphate. It functions in the pathway carbohydrate biosynthesis; gluconeogenesis. Its pathway is carbohydrate degradation; glycolysis; D-glyceraldehyde 3-phosphate from glycerone phosphate: step 1/1. Functionally, involved in the gluconeogenesis. Catalyzes stereospecifically the conversion of dihydroxyacetone phosphate (DHAP) to D-glyceraldehyde-3-phosphate (G3P). The sequence is that of Triosephosphate isomerase from Acidiphilium cryptum (strain JF-5).